The sequence spans 801 residues: Phenylalanine--tRNA ligase beta subunit (801 aa).

Positions 39-153 constitute a tRNA-binding domain; it reads AAGLSKIVVG…EDAVPGEEVF (115 aa). The B5 domain occupies 406–481; the sequence is TSDVEVSSTL…RIYGYDRLPT (76 aa). Mg(2+) is bound by residues Asp459, Asp465, Glu468, and Glu469. The 94-residue stretch at 708-801 folds into the FDX-ACB domain; that stretch reads TKFPAVSRDV…LEEKVNAEVR (94 aa).

This sequence belongs to the phenylalanyl-tRNA synthetase beta subunit family. Type 1 subfamily. In terms of assembly, tetramer of two alpha and two beta subunits. It depends on Mg(2+) as a cofactor.

The protein localises to the cytoplasm. The catalysed reaction is tRNA(Phe) + L-phenylalanine + ATP = L-phenylalanyl-tRNA(Phe) + AMP + diphosphate + H(+). In Streptococcus pneumoniae serotype 4 (strain ATCC BAA-334 / TIGR4), this protein is Phenylalanine--tRNA ligase beta subunit.